A 77-amino-acid polypeptide reads, in one-letter code: Putative ankyrin repeat protein RC0956 (77 aa).

One copy of the ANK repeat lies at 8 to 38 (TDISPLMLASEYGQVTIVKYLLKHGNYNVKG).

The chain is Putative ankyrin repeat protein RC0956 from Rickettsia conorii (strain ATCC VR-613 / Malish 7).